A 65-amino-acid polypeptide reads, in one-letter code: Large ribosomal subunit protein bL35 (65 aa).

It belongs to the bacterial ribosomal protein bL35 family.

The polypeptide is Large ribosomal subunit protein bL35 (Photorhabdus laumondii subsp. laumondii (strain DSM 15139 / CIP 105565 / TT01) (Photorhabdus luminescens subsp. laumondii)).